The sequence spans 280 residues: Large ribosomal subunit protein uL2 (280 aa).

2 disordered regions span residues 1–58 (MAIR…GGGH) and 226–280 (MNPV…KHGR). Composition is skewed to basic residues over residues 37–58 (LHGHGGRNAHGRITTRHKGGGH) and 268–280 (IVRRRRTGKKHGR).

It belongs to the universal ribosomal protein uL2 family. In terms of assembly, part of the 50S ribosomal subunit. Forms a bridge to the 30S subunit in the 70S ribosome.

One of the primary rRNA binding proteins. Required for association of the 30S and 50S subunits to form the 70S ribosome, for tRNA binding and peptide bond formation. It has been suggested to have peptidyltransferase activity; this is somewhat controversial. Makes several contacts with the 16S rRNA in the 70S ribosome. This chain is Large ribosomal subunit protein uL2, found in Mycobacterium avium (strain 104).